The chain runs to 467 residues: MGGAEDAPRAAAANGHGNGATVEEKLDELRRLLGKADGDPLRIVGVGAGAWGSVFCALMQDAYGHLRDKVQVRIWRRPGRAVDRATAEHLFEVINAREDVLRRLIRRCAYLKYVEGRLGDRTLYADEILRDGFCLNMIDTPLCPLKVVTNLQEAVWDADIVINGLPSTDTREVFGEIGRYWKERITAPIILSLAKGIEASLDPLPRIITPTQMISNATGVPLENILYLGGPNIASEIYNKEYANARICGADKWRKPLAKFLRQPHFIVWDNSDLITHEVMGGLKNVYAIGAGMVAALTNESATSKSVYFALCTSEMIYITHLLEEEPEKLAGPLLADTYVTLLKGRNAWYGQKLAKGELTLEMGDSIKGKGTIQGVSAVNAFYELLSQDSLSVMHPEANRSVAPVEMCPILKALYKILIKRELPPDSILQAIRDETMYDPRERIEMAQGHSLYRPSLLGQPKGDAKA.

NAD(+)-binding positions include 47–52 (GAGAWG), Lys-195, and Ala-234. Residue Lys-195 coordinates substrate. Lys-284 acts as the Proton acceptor in catalysis. The NAD(+) site is built by Arg-346 and Gln-374. 346–347 (RN) contributes to the substrate binding site.

It belongs to the NAD-dependent glycerol-3-phosphate dehydrogenase family.

The protein localises to the cytoplasm. It is found in the cytosol. The catalysed reaction is sn-glycerol 3-phosphate + NAD(+) = dihydroxyacetone phosphate + NADH + H(+). Functionally, may be involved in cell redox homeostasis. In Oryza sativa subsp. japonica (Rice), this protein is Probable glycerol-3-phosphate dehydrogenase [NAD(+)] 2, cytosolic.